Reading from the N-terminus, the 782-residue chain is Zinc finger protein 786 (782 aa).

Positions 9-80 (LTFEDVAIYF…WRESQKSGNI (72 aa)) constitute a KRAB domain. The disordered stretch occupies residues 141-164 (PQRHDARAPPPLACGPSESTLKEG). The C2H2-type 1; degenerate zinc finger occupies 192 to 209 (CGESCWENNHLVMHQRGH). The C2H2-type 2 zinc finger occupies 240–262 (FRCGVCGKSFRRKLCLLRHLAAH). Residues 285–364 (SHRLPQQGEK…EGDTEALQHG (80 aa)) are disordered. Residues 369–391 (CSCSECGERSPMSARLASPCRAH) form a C2H2-type 3; degenerate zinc finger. 3 consecutive C2H2-type zinc fingers follow at residues 397–419 (FQCAHCTKRFRLRRLLQVHQHAH), 425–447 (FSCRKCGKGFAKQCKLTEHIRVH), and 453–475 (FRCAKCGRNFRQRGQLLRHQRLH). A C2H2-type 7; degenerate zinc finger spans residues 481–503 (FQCPECGLSFRLESMLRAHRLRH). C2H2-type zinc fingers lie at residues 509-531 (FSCSECGRGFTHQCKLREHLRVH), 537-559 (FQCLKCDKRFRLKGILKAHQHTH), 565-587 (FSCGECGKGFTRQSKLTEHLRVH), 593-615 (FQCPECNRSFRLKGQLLSHQRLH), 621-643 (FQCPECDKRYRVKADMKAHQLLH), 649-670 (FSCECGKGFVKHSKLIEHIRTH), 676-698 (FQCPKCDKSFRLKAQLLSHQGLH), 704-726 (FHCPECDKNFRERGHMLRHQRIH), and 732-754 (FACGDCGKGFIYKSKLAEHIRVH).

It belongs to the krueppel C2H2-type zinc-finger protein family.

It localises to the nucleus. Its function is as follows. May be involved in transcriptional regulation. This Homo sapiens (Human) protein is Zinc finger protein 786 (ZNF786).